Here is a 574-residue protein sequence, read N- to C-terminus: Adenine deaminase (574 aa).

It belongs to the metallo-dependent hydrolases superfamily. Adenine deaminase family. The cofactor is Mn(2+).

It catalyses the reaction adenine + H2O + H(+) = hypoxanthine + NH4(+). The protein is Adenine deaminase of Thermosipho africanus (strain TCF52B).